The primary structure comprises 342 residues: tRNA N6-adenosine threonylcarbamoyltransferase (342 aa).

2 residues coordinate Fe cation: H115 and H119. Substrate is bound by residues 138 to 142 (IISGG), D171, G184, D188, and N276. D304 is a Fe cation binding site.

This sequence belongs to the KAE1 / TsaD family. Requires Fe(2+) as cofactor.

It is found in the cytoplasm. The enzyme catalyses L-threonylcarbamoyladenylate + adenosine(37) in tRNA = N(6)-L-threonylcarbamoyladenosine(37) in tRNA + AMP + H(+). Its function is as follows. Required for the formation of a threonylcarbamoyl group on adenosine at position 37 (t(6)A37) in tRNAs that read codons beginning with adenine. Is involved in the transfer of the threonylcarbamoyl moiety of threonylcarbamoyl-AMP (TC-AMP) to the N6 group of A37, together with TsaE and TsaB. TsaD likely plays a direct catalytic role in this reaction. This Endomicrobium trichonymphae protein is tRNA N6-adenosine threonylcarbamoyltransferase.